Here is a 303-residue protein sequence, read N- to C-terminus: Glycine--tRNA ligase alpha subunit (303 aa).

Belongs to the class-II aminoacyl-tRNA synthetase family. In terms of assembly, tetramer of two alpha and two beta subunits.

The protein resides in the cytoplasm. The enzyme catalyses tRNA(Gly) + glycine + ATP = glycyl-tRNA(Gly) + AMP + diphosphate. The sequence is that of Glycine--tRNA ligase alpha subunit from Cronobacter sakazakii (strain ATCC BAA-894) (Enterobacter sakazakii).